The sequence spans 2594 residues: Protein sevenless (2594 aa).

2 disordered regions span residues 1-34 (MFWREDAAQQQQQQQQQQQQQQQQQQPPHPPKRL) and 49-92 (KMST…RVRR). Residues 1-2141 (MFWREDAAQQ…FVSPEKRGSL (2141 aa)) lie on the Extracellular side of the membrane. Low complexity predominate over residues 9-26 (QQQQQQQQQQQQQQQQQQ). N-linked (GlcNAc...) asparagine glycosylation is found at Asn77, Asn401, Asn508, Asn532, Asn641, Asn667, Asn778, Asn797, Asn874, and Asn980. 2 Fibronectin type-III domains span residues 358 to 462 (ETTQ…TPME) and 468 to 560 (APII…SPLE). One can recognise a Fibronectin type-III 3 domain in the interval 838–938 (PPAPRELRAL…APLATRTWPL (101 aa)). Residues 1024–1066 (GLLYWTDLARDCVQRLDPFSGERELLPIFGARHLALDSAQGHL) form an LDL-receptor class B repeat. 2 Fibronectin type-III domains span residues 1227–1317 (LAVP…QLDT) and 1324–1430 (QPRR…VQSV). 12 N-linked (GlcNAc...) asparagine glycosylation sites follow: Asn1257, Asn1344, Asn1382, Asn1577, Asn1587, Asn1665, Asn1752, Asn1776, Asn1824, Asn1908, Asn1966, and Asn2088. 4 Fibronectin type-III domains span residues 1711 to 1814 (TAAA…TLHT), 1821 to 1920 (APRN…SYAP), 1922 to 2010 (PPLQ…TLGD), and 2014 to 2132 (APGR…AEPF). The chain crosses the membrane as a helical span at residues 2142 to 2162 (VLAIIAPAAIVSSCVLALVLV). At 2163-2594 (RKLQKRRHRA…LYANEGISGL (432 aa)) the chain is on the cytoplasmic side. The Protein kinase domain maps to 2224-2495 (LTLLRFLGSG…KRCLSTLQAL (272 aa)). ATP contacts are provided by residues 2230-2238 (LGSGAFGEV) and Lys2257. The active-site Proton acceptor is Asp2355. Tyr2391 carries the phosphotyrosine; by autocatalysis modification. Residues 2543-2568 (TVSTTDADTTGSPTTPTAPTTPTTTT) form a disordered region. The segment covering 2545–2568 (STTDADTTGSPTTPTAPTTPTTTT) has biased composition (low complexity).

Belongs to the protein kinase superfamily. Tyr protein kinase family. Insulin receptor subfamily.

The protein resides in the cell membrane. It catalyses the reaction L-tyrosyl-[protein] + ATP = O-phospho-L-tyrosyl-[protein] + ADP + H(+). Receptor for an extracellular signal required to instruct a cell to differentiate into a R7 photoreceptor. The ligand for Sev is the Boss (Bride of Sevenless) protein. The chain is Protein sevenless (sev) from Drosophila virilis (Fruit fly).